A 365-amino-acid chain; its full sequence is Dual-specificity RNA methyltransferase RlmN (365 aa).

The Proton acceptor role is filled by Glu91. In terms of domain architecture, Radical SAM core spans 97–337; sequence ETSRGTLCIS…TTVRKTRGDD (241 aa). A disulfide bridge connects residues Cys104 and Cys342. [4Fe-4S] cluster-binding residues include Cys111, Cys115, and Cys118. Residues 168–169, Ser200, 222–224, and Asn299 each bind S-adenosyl-L-methionine; these read GE and SLH. Residue Cys342 is the S-methylcysteine intermediate of the active site.

The protein belongs to the radical SAM superfamily. RlmN family. It depends on [4Fe-4S] cluster as a cofactor.

The protein localises to the cytoplasm. The enzyme catalyses adenosine(2503) in 23S rRNA + 2 reduced [2Fe-2S]-[ferredoxin] + 2 S-adenosyl-L-methionine = 2-methyladenosine(2503) in 23S rRNA + 5'-deoxyadenosine + L-methionine + 2 oxidized [2Fe-2S]-[ferredoxin] + S-adenosyl-L-homocysteine. It carries out the reaction adenosine(37) in tRNA + 2 reduced [2Fe-2S]-[ferredoxin] + 2 S-adenosyl-L-methionine = 2-methyladenosine(37) in tRNA + 5'-deoxyadenosine + L-methionine + 2 oxidized [2Fe-2S]-[ferredoxin] + S-adenosyl-L-homocysteine. Specifically methylates position 2 of adenine 2503 in 23S rRNA and position 2 of adenine 37 in tRNAs. m2A2503 modification seems to play a crucial role in the proofreading step occurring at the peptidyl transferase center and thus would serve to optimize ribosomal fidelity. The protein is Dual-specificity RNA methyltransferase RlmN of Nitrosospira multiformis (strain ATCC 25196 / NCIMB 11849 / C 71).